We begin with the raw amino-acid sequence, 260 residues long: MSAIHPTAIVEDGAILGENVSVGPFAYIGAKVSIDDGTSVASHAVIEGRTSIGKNNRIFSHSAIGTIPQDLKYAGEDVELIIGDNNNIREFTLLNPGTKGGGSVTKIGNGNLLMGYVHLGHDVILGDNCILANGATLAGHVELGNNVVIGGLTPVHQFVHVGDFAMIGGASALAQDIPPYCLAEGNRATLRGLNLTGLRRHIPREEINALKSAYRELFEEGKALQDVAQRLFEESSSEKVKNLCKFIKTSKRGIPFTRKS.

It belongs to the transferase hexapeptide repeat family. LpxA subfamily. Homotrimer.

The protein localises to the cytoplasm. It carries out the reaction a (3R)-hydroxyacyl-[ACP] + UDP-N-acetyl-alpha-D-glucosamine = a UDP-3-O-[(3R)-3-hydroxyacyl]-N-acetyl-alpha-D-glucosamine + holo-[ACP]. The protein operates within glycolipid biosynthesis; lipid IV(A) biosynthesis; lipid IV(A) from (3R)-3-hydroxytetradecanoyl-[acyl-carrier-protein] and UDP-N-acetyl-alpha-D-glucosamine: step 1/6. In terms of biological role, involved in the biosynthesis of lipid A, a phosphorylated glycolipid that anchors the lipopolysaccharide to the outer membrane of the cell. The protein is Acyl-[acyl-carrier-protein]--UDP-N-acetylglucosamine O-acyltransferase of Sulfurovum sp. (strain NBC37-1).